The sequence spans 173 residues: Co-chaperone protein HscB homolog (173 aa).

A J domain is found at 5 to 77; the sequence is CHYALFDLQP…PRRARYLLAI (73 aa).

It belongs to the HscB family. In terms of assembly, interacts with HscA and stimulates its ATPase activity.

In terms of biological role, co-chaperone involved in the maturation of iron-sulfur cluster-containing proteins. Seems to help targeting proteins to be folded toward HscA. The protein is Co-chaperone protein HscB homolog of Pseudomonas putida (strain ATCC 700007 / DSM 6899 / JCM 31910 / BCRC 17059 / LMG 24140 / F1).